Consider the following 601-residue polypeptide: Sestrin homolog (601 aa).

The span at methionine 1–glutamine 11 shows a compositional bias: polar residues. Residues methionine 1–asparagine 58 form a disordered region. N-linked (GlcNAc...) asparagine glycosylation is present at asparagine 20. The span at serine 21 to serine 32 shows a compositional bias: low complexity. N-linked (GlcNAc...) asparagine glycosylation is found at asparagine 322 and asparagine 330. The tract at residues arginine 355–serine 425 is disordered. Basic and acidic residues predominate over residues leucine 368–glycine 379. Over residues aspartate 380–serine 425 the composition is skewed to low complexity. Asparagine 387, asparagine 388, asparagine 406, asparagine 438, and asparagine 499 each carry an N-linked (GlcNAc...) asparagine glycan.

This sequence belongs to the sestrin family.

It is found in the nucleus. Its subcellular location is the cytoplasm. May function as a negative feedback regulator of TOR function. In Dictyostelium discoideum (Social amoeba), this protein is Sestrin homolog.